Here is a 94-residue protein sequence, read N- to C-terminus: Large ribosomal subunit protein eL43B (94 aa).

The C4-type zinc finger occupies 39-62 (CPFCGRLTVKRTAAGIWKCSGKGC).

It belongs to the eukaryotic ribosomal protein eL43 family. In terms of assembly, component of the large ribosomal subunit (LSU). Mature yeast ribosomes consist of a small (40S) and a large (60S) subunit. The 40S small subunit contains 1 molecule of ribosomal RNA (18S rRNA) and at least 33 different proteins. The large 60S subunit contains 3 rRNA molecules (25S, 5.8S and 5S rRNA) and at least 46 different proteins.

It localises to the cytoplasm. Its function is as follows. Component of the ribosome, a large ribonucleoprotein complex responsible for the synthesis of proteins in the cell. The small ribosomal subunit (SSU) binds messenger RNAs (mRNAs) and translates the encoded message by selecting cognate aminoacyl-transfer RNA (tRNA) molecules. The large subunit (LSU) contains the ribosomal catalytic site termed the peptidyl transferase center (PTC), which catalyzes the formation of peptide bonds, thereby polymerizing the amino acids delivered by tRNAs into a polypeptide chain. The nascent polypeptides leave the ribosome through a tunnel in the LSU and interact with protein factors that function in enzymatic processing, targeting, and the membrane insertion of nascent chains at the exit of the ribosomal tunnel. In Schizosaccharomyces pombe (strain 972 / ATCC 24843) (Fission yeast), this protein is Large ribosomal subunit protein eL43B (rpl4302).